Consider the following 137-residue polypeptide: Small ribosomal subunit protein uS11 (137 aa).

Residues 1–25 form a disordered region; it reads MADRRRGAARGGAARPRRRERKNIP. The segment covering 15–25 has biased composition (basic residues); sequence RPRRRERKNIP.

Belongs to the universal ribosomal protein uS11 family. Part of the 30S ribosomal subunit. Interacts with proteins S7 and S18. Binds to IF-3.

In terms of biological role, located on the platform of the 30S subunit, it bridges several disparate RNA helices of the 16S rRNA. Forms part of the Shine-Dalgarno cleft in the 70S ribosome. In Thermomicrobium roseum (strain ATCC 27502 / DSM 5159 / P-2), this protein is Small ribosomal subunit protein uS11.